We begin with the raw amino-acid sequence, 114 residues long: Ghrelin (114 aa).

An N-terminal signal peptide occupies residues 1-24 (MNFGKAAIFGVVLFCLLWTEGAQA). Threonine 27 carries O-decanoyl threonine; alternate lipidation. The O-octanoyl threonine; alternate moiety is linked to residue threonine 27. Positions 55 to 114 (GVEDDLAGEEIGVTFPLDMKMTQEQFQKQRAAVQDFLYSSLLSLGSVQDTEDKNENPQSQ) are cleaved as a propeptide — removed in mature form.

This sequence belongs to the motilin family. Post-translationally, O-octanoylated by GOAT/MBOAT4. O-octanoylation or O-decanoylation is essential for activity. The O-decanoylated form ghrelin-27-C10 differs in the length of the carbon backbone of the carboxylic acid bound to Thr-27. 33% of frog ghrelin is O-decanoylated. 80% of frog ghrelin has Asn-52 cleaved from its C-terminus giving rise to ghrelin-27. As to expression, high levels in stomach. Moderate levels in small intestine, pancreas and testis. Low levels in heart, lung and gall bladder.

The protein localises to the secreted. Its function is as follows. Ligand for growth hormone secretagogue receptor type 1 (GHSR). Induces the release of growth hormone from the pituitary. Has an appetite-stimulating effect, induces adiposity and stimulates gastric acid secretion. Involved in growth regulation. The protein is Ghrelin (GHRL) of Aquarana catesbeiana (American bullfrog).